The primary structure comprises 156 residues: ATP synthase subunit b (156 aa).

Residues 11–31 (LIAFALFVWFCMKFVWPPIIN) traverse the membrane as a helical segment.

This sequence belongs to the ATPase B chain family. F-type ATPases have 2 components, F(1) - the catalytic core - and F(0) - the membrane proton channel. F(1) has five subunits: alpha(3), beta(3), gamma(1), delta(1), epsilon(1). F(0) has three main subunits: a(1), b(2) and c(10-14). The alpha and beta chains form an alternating ring which encloses part of the gamma chain. F(1) is attached to F(0) by a central stalk formed by the gamma and epsilon chains, while a peripheral stalk is formed by the delta and b chains.

It localises to the cell inner membrane. In terms of biological role, f(1)F(0) ATP synthase produces ATP from ADP in the presence of a proton or sodium gradient. F-type ATPases consist of two structural domains, F(1) containing the extramembraneous catalytic core and F(0) containing the membrane proton channel, linked together by a central stalk and a peripheral stalk. During catalysis, ATP synthesis in the catalytic domain of F(1) is coupled via a rotary mechanism of the central stalk subunits to proton translocation. Component of the F(0) channel, it forms part of the peripheral stalk, linking F(1) to F(0). In Haemophilus influenzae (strain PittGG), this protein is ATP synthase subunit b.